The chain runs to 479 residues: Ribulose bisphosphate carboxylase large chain (479 aa).

A propeptide spanning residues 1 to 2 (MS) is cleaved from the precursor. The residue at position 3 (Pro-3) is an N-acetylproline. At Lys-14 the chain carries N6,N6,N6-trimethyllysine. 2 residues coordinate substrate: Asn-123 and Thr-173. The active-site Proton acceptor is Lys-175. Lys-177 contacts substrate. Lys-201, Asp-203, and Glu-204 together coordinate Mg(2+). N6-carboxylysine is present on Lys-201. His-294 (proton acceptor) is an active-site residue. Residues Arg-295, His-327, and Ser-379 each coordinate substrate.

Belongs to the RuBisCO large chain family. Type I subfamily. Heterohexadecamer of 8 large chains and 8 small chains; disulfide-linked. The disulfide link is formed within the large subunit homodimers. Mg(2+) serves as cofactor. In terms of processing, the disulfide bond which can form in the large chain dimeric partners within the hexadecamer appears to be associated with oxidative stress and protein turnover.

It localises to the plastid. The protein localises to the chloroplast. The enzyme catalyses 2 (2R)-3-phosphoglycerate + 2 H(+) = D-ribulose 1,5-bisphosphate + CO2 + H2O. The catalysed reaction is D-ribulose 1,5-bisphosphate + O2 = 2-phosphoglycolate + (2R)-3-phosphoglycerate + 2 H(+). In terms of biological role, ruBisCO catalyzes two reactions: the carboxylation of D-ribulose 1,5-bisphosphate, the primary event in carbon dioxide fixation, as well as the oxidative fragmentation of the pentose substrate in the photorespiration process. Both reactions occur simultaneously and in competition at the same active site. This Ananas comosus (Pineapple) protein is Ribulose bisphosphate carboxylase large chain.